Here is a 486-residue protein sequence, read N- to C-terminus: 6-phosphogluconate dehydrogenase, decarboxylating 2 (486 aa).

NADP(+) is bound by residues 12 to 17 (GLAVMG), 35 to 37 (NRT), 79 to 81 (VKA), and Asn-107. Substrate contacts are provided by residues Asn-107 and 133 to 135 (SGG). The Proton acceptor role is filled by Lys-188. Position 191–192 (191–192 (HN)) interacts with substrate. The active-site Proton donor is the Glu-195. Residues Tyr-196, Lys-266, Arg-293, Arg-456, and His-462 each contribute to the substrate site. The Microbody targeting signal motif lies at 484–486 (SKI).

The protein belongs to the 6-phosphogluconate dehydrogenase family. Forms homodimer. Forms heterodimers with PGD1 or PGD3.

It is found in the cytoplasm. The protein resides in the cytosol. Its subcellular location is the peroxisome. The enzyme catalyses 6-phospho-D-gluconate + NADP(+) = D-ribulose 5-phosphate + CO2 + NADPH. Its pathway is carbohydrate degradation; pentose phosphate pathway; D-ribulose 5-phosphate from D-glucose 6-phosphate (oxidative stage): step 3/3. In terms of biological role, catalyzes the oxidative decarboxylation of 6-phosphogluconate to ribulose 5-phosphate and CO(2), with concomitant reduction of NADP to NADPH. Required for guided growth of the male gametophytes and interaction between the pollen tube and the ovule. This is 6-phosphogluconate dehydrogenase, decarboxylating 2 from Arabidopsis thaliana (Mouse-ear cress).